Reading from the N-terminus, the 626-residue chain is Coilin (626 aa).

S148 and S162 each carry phosphoserine. Disordered regions lie at residues 253–309 (LTSQ…ISSN) and 382–433 (RGCE…NKKS). A compositionally biased stretch (low complexity) spans 260 to 292 (STPSESDSSSSESSSSVSDSSDLSSTSDSSSGD). The span at 382 to 395 (RGCENTEKPSEEGK) shows a compositional bias: basic and acidic residues. The span at 396–417 (NFTTPLSDSVESENTWSNTLRS) shows a compositional bias: polar residues.

This sequence belongs to the coilin family. As to quaternary structure, interacts with tgs1; both proteins are required to maintain Cajal body integrity. Interacts with U2 and U5 snRNAs.

Its subcellular location is the cytoplasm. It is found in the nucleus. The protein resides in the cajal body. Component of nuclear coiled bodies, also known as Cajal bodies or CBs, which are involved in the modification and assembly of nucleoplasmic snRNPs. Required for proper pre-mRNA splicing. The polypeptide is Coilin (Schizosaccharomyces pombe (strain 972 / ATCC 24843) (Fission yeast)).